The following is a 136-amino-acid chain: Small cardioactive peptides (136 aa).

Positions 1–24 are cleaved as a signal peptide; sequence METSVSRVTVSLTLLVLIICSADA. Methionine amide occurs at positions 33 and 46. A propeptide spans 49–135 (carboxy-terminal peptide); the sequence is SQMKTETGTD…VLSKLKSLLQ (87 aa).

It belongs to the SCP family. Contains three disulfide bonds. As to expression, highly expressed in the buccal ganglion.

The protein localises to the secreted. Functionally, involved in the stimulation of contractile activity in the gut, the increase of the amplitude of the heart beat, and enhancement of the contractile response of the radula closer muscle. In Aplysia californica (California sea hare), this protein is Small cardioactive peptides.